The following is a 238-amino-acid chain: Ribonuclease PH (238 aa).

A disordered region spans residues 64–86; it reads GMLPRSTGSRMDREAARGKQSGR. Phosphate is bound by residues Arg-86 and 124–126; that span reads GTR.

Belongs to the RNase PH family. As to quaternary structure, homohexameric ring arranged as a trimer of dimers.

It catalyses the reaction tRNA(n+1) + phosphate = tRNA(n) + a ribonucleoside 5'-diphosphate. Functionally, phosphorolytic 3'-5' exoribonuclease that plays an important role in tRNA 3'-end maturation. Removes nucleotide residues following the 3'-CCA terminus of tRNAs; can also add nucleotides to the ends of RNA molecules by using nucleoside diphosphates as substrates, but this may not be physiologically important. Probably plays a role in initiation of 16S rRNA degradation (leading to ribosome degradation) during starvation. This Methylobacillus flagellatus (strain ATCC 51484 / DSM 6875 / VKM B-1610 / KT) protein is Ribonuclease PH.